Consider the following 419-residue polypeptide: E3 ubiquitin-protein ligase pellino homolog 2 (419 aa).

The FHA; atypical domain maps to 15–202 (EPVKYRELVV…HPQGGFTEES (188 aa)).

Belongs to the pellino family. Interacts with TRAF6, IRAK4 and MAP3K7. Interacts with IRAK1. Interacts with BCL10; this interaction is impaired by SOCS3. Phosphorylated by IRAK1 and IRAK4 enhancing its E3 ligase activity. In terms of tissue distribution, widely expressed both in embryos and adult. Weakly or not expressed in spleen and thymus.

The catalysed reaction is S-ubiquitinyl-[E2 ubiquitin-conjugating enzyme]-L-cysteine + [acceptor protein]-L-lysine = [E2 ubiquitin-conjugating enzyme]-L-cysteine + N(6)-ubiquitinyl-[acceptor protein]-L-lysine.. It participates in protein modification; protein ubiquitination. In terms of biological role, E3 ubiquitin ligase catalyzing the covalent attachment of ubiquitin moieties onto substrate proteins. Involved in the TLR and IL-1 signaling pathways via interaction with the complex containing IRAK kinases and TRAF6. Mediates IL1B-induced IRAK1 'Lys-63'-linked polyubiquitination and possibly 'Lys-48'-linked ubiquitination. May be important for LPS- and IL1B-induced MAP3K7-dependent, but not MAP3K3-dependent, NF-kappa-B activation. Can activate the MAP (mitogen activated protein) kinase pathway leading to activation of ELK1. This chain is E3 ubiquitin-protein ligase pellino homolog 2 (Peli2), found in Mus musculus (Mouse).